We begin with the raw amino-acid sequence, 179 residues long: Ribosome maturation factor RimP (179 aa).

The protein belongs to the RimP family.

It localises to the cytoplasm. Its function is as follows. Required for maturation of 30S ribosomal subunits. The polypeptide is Ribosome maturation factor RimP (Prosthecochloris aestuarii (strain DSM 271 / SK 413)).